An 837-amino-acid chain; its full sequence is Striatin-interacting protein 1 (837 aa).

An N-acetylmethionine modification is found at methionine 1. Disordered regions lie at residues 1–67 and 333–423; these read MEPA…ESPD and AASP…KGLP. Over residues 18 to 35 the composition is skewed to pro residues; the sequence is PQPPPPPPPATAQPPPGA. Residues 36–46 are compositionally biased toward low complexity; the sequence is PRAAAGLLPGG. Residues 47 to 60 show a composition bias toward basic and acidic residues; that stretch reads KAREFNRNQRKDSE. A phosphoserine mark is found at serine 59, serine 335, and serine 339. Over residues 333–343 the composition is skewed to low complexity; it reads AASPPASASDS. Residues 356 to 377 are compositionally biased toward basic and acidic residues; that stretch reads KALIKQDNLDAFNERDPYKADD. Acidic residues predominate over residues 378–391; that stretch reads SREEEEENDDDNSL. Serine 788 is subject to Phosphoserine. The tract at residues 796-837 is required for STRIPAK core complex formation; sequence DNCLQSVLGQRVDLPEDFQMNYDLWLEREVFSKPISWEELLQ.

This sequence belongs to the STRIP family. Part of the core of STRIPAK complexes composed of PP2A catalytic and scaffolding subunits, the striatins (PP2A regulatory subunits), the striatin-associated proteins MOB4, STRIP1 and STRIP2, PDCD10 and members of the STE20 kinases, such as STK24 and STK26. The STRIPAK complex can be extended by adapter proteins such as SLMAP:SIKE1, CTTNBP2 or CTTNBP2NL. Interacts with CDC42BPB. Interacts with CTTNBP2NL.

The protein localises to the cytoplasm. Its function is as follows. Plays a role in the regulation of cell morphology and cytoskeletal organization. Required in the cortical actin filament dynamics and cell shape. Part of the striatin-interacting phosphatase and kinase (STRIPAK) complexes. STRIPAK complexes have critical roles in protein (de)phosphorylation and are regulators of multiple signaling pathways including Hippo, MAPK, nuclear receptor and cytoskeleton remodeling. Different types of STRIPAK complexes are involved in a variety of biological processes such as cell growth, differentiation, apoptosis, metabolism and immune regulation. The sequence is that of Striatin-interacting protein 1 (STRIP1) from Pongo abelii (Sumatran orangutan).